Consider the following 508-residue polypeptide: UDP-N-acetylmuramyl-tripeptide synthetase (508 aa).

S35 is a UDP-N-acetyl-alpha-D-muramoyl-L-alanyl-D-glutamate binding site. 118 to 124 (GTDGKSS) provides a ligand contact to ATP. UDP-N-acetyl-alpha-D-muramoyl-L-alanyl-D-glutamate-binding positions include 163–164 (ST), T190, and R200. An N6-carboxylysine modification is found at K232.

Belongs to the MurCDEF family. MurE subfamily. Carboxylation is probably crucial for Mg(2+) binding and, consequently, for the gamma-phosphate positioning of ATP.

It is found in the cytoplasm. The protein operates within cell wall biogenesis; peptidoglycan biosynthesis. In terms of biological role, catalyzes the addition of an amino acid to the nucleotide precursor UDP-N-acetylmuramoyl-L-alanyl-D-glutamate (UMAG) in the biosynthesis of bacterial cell-wall peptidoglycan. The chain is UDP-N-acetylmuramyl-tripeptide synthetase from Borreliella burgdorferi (strain ATCC 35210 / DSM 4680 / CIP 102532 / B31) (Borrelia burgdorferi).